A 291-amino-acid chain; its full sequence is Ribosomal protein L11 methyltransferase (291 aa).

Residues Thr-136, Gly-159, Asp-181, and Asn-228 each coordinate S-adenosyl-L-methionine.

The protein belongs to the methyltransferase superfamily. PrmA family.

The protein resides in the cytoplasm. The catalysed reaction is L-lysyl-[protein] + 3 S-adenosyl-L-methionine = N(6),N(6),N(6)-trimethyl-L-lysyl-[protein] + 3 S-adenosyl-L-homocysteine + 3 H(+). Its function is as follows. Methylates ribosomal protein L11. The sequence is that of Ribosomal protein L11 methyltransferase from Rhizobium meliloti (strain 1021) (Ensifer meliloti).